The chain runs to 136 residues: Large ribosomal subunit protein uL16 (136 aa).

The protein belongs to the universal ribosomal protein uL16 family. Part of the 50S ribosomal subunit.

Functionally, binds 23S rRNA and is also seen to make contacts with the A and possibly P site tRNAs. The protein is Large ribosomal subunit protein uL16 of Ehrlichia ruminantium (strain Gardel).